The chain runs to 484 residues: Probable cytosol aminopeptidase (484 aa).

2 residues coordinate Mn(2+): K256 and D261. The active site involves K268. The Mn(2+) site is built by D279, D338, and E340. R342 is a catalytic residue.

The protein belongs to the peptidase M17 family. Mn(2+) is required as a cofactor.

It is found in the cytoplasm. The enzyme catalyses Release of an N-terminal amino acid, Xaa-|-Yaa-, in which Xaa is preferably Leu, but may be other amino acids including Pro although not Arg or Lys, and Yaa may be Pro. Amino acid amides and methyl esters are also readily hydrolyzed, but rates on arylamides are exceedingly low.. The catalysed reaction is Release of an N-terminal amino acid, preferentially leucine, but not glutamic or aspartic acids.. Presumably involved in the processing and regular turnover of intracellular proteins. Catalyzes the removal of unsubstituted N-terminal amino acids from various peptides. The chain is Probable cytosol aminopeptidase from Actinobacillus succinogenes (strain ATCC 55618 / DSM 22257 / CCUG 43843 / 130Z).